Consider the following 240-residue polypeptide: Uridylate kinase (240 aa).

Position 13–16 (13–16) interacts with ATP; that stretch reads KASG. The segment at 21 to 26 is involved in allosteric activation by GTP; sequence GSQGFG. Gly-55 serves as a coordination point for UMP. Positions 56 and 60 each coordinate ATP. Residues Asp-75 and 136–143 each bind UMP; that span reads TGNPFFTT. Residues Thr-163, Gln-164, Tyr-169, and Asp-172 each coordinate ATP.

It belongs to the UMP kinase family. As to quaternary structure, homohexamer.

Its subcellular location is the cytoplasm. It catalyses the reaction UMP + ATP = UDP + ADP. It functions in the pathway pyrimidine metabolism; CTP biosynthesis via de novo pathway; UDP from UMP (UMPK route): step 1/1. Allosterically activated by GTP. Inhibited by UTP. Functionally, catalyzes the reversible phosphorylation of UMP to UDP. The sequence is that of Uridylate kinase from Sinorhizobium medicae (strain WSM419) (Ensifer medicae).